The chain runs to 312 residues: Acetylglutamate kinase (312 aa).

Residues 74-75 (GG), Arg-96, and Asn-195 contribute to the substrate site.

This sequence belongs to the acetylglutamate kinase family. ArgB subfamily.

The protein localises to the cytoplasm. The enzyme catalyses N-acetyl-L-glutamate + ATP = N-acetyl-L-glutamyl 5-phosphate + ADP. It participates in amino-acid biosynthesis; L-arginine biosynthesis; N(2)-acetyl-L-ornithine from L-glutamate: step 2/4. Its function is as follows. Catalyzes the ATP-dependent phosphorylation of N-acetyl-L-glutamate. The polypeptide is Acetylglutamate kinase (Nocardioides sp. (strain ATCC BAA-499 / JS614)).